A 283-amino-acid chain; its full sequence is Bifunctional protein FolD (283 aa).

166–168 (GAS) provides a ligand contact to NADP(+).

The protein belongs to the tetrahydrofolate dehydrogenase/cyclohydrolase family. Homodimer.

The enzyme catalyses (6R)-5,10-methylene-5,6,7,8-tetrahydrofolate + NADP(+) = (6R)-5,10-methenyltetrahydrofolate + NADPH. The catalysed reaction is (6R)-5,10-methenyltetrahydrofolate + H2O = (6R)-10-formyltetrahydrofolate + H(+). Its pathway is one-carbon metabolism; tetrahydrofolate interconversion. In terms of biological role, catalyzes the oxidation of 5,10-methylenetetrahydrofolate to 5,10-methenyltetrahydrofolate and then the hydrolysis of 5,10-methenyltetrahydrofolate to 10-formyltetrahydrofolate. The polypeptide is Bifunctional protein FolD (Coxiella burnetii (strain Dugway 5J108-111)).